A 209-amino-acid chain; its full sequence is Large ribosomal subunit protein uL3 (209 aa).

Belongs to the universal ribosomal protein uL3 family. Part of the 50S ribosomal subunit. Forms a cluster with proteins L14 and L19.

In terms of biological role, one of the primary rRNA binding proteins, it binds directly near the 3'-end of the 23S rRNA, where it nucleates assembly of the 50S subunit. This Lactiplantibacillus plantarum (strain ATCC BAA-793 / NCIMB 8826 / WCFS1) (Lactobacillus plantarum) protein is Large ribosomal subunit protein uL3.